Reading from the N-terminus, the 129-residue chain is MAKEFSRTQRIGDQMQRELALLIQREIKDPRLGLITITAVDVSRDLSHAKIFITIMGQDDDQEAIKGNLRILNDAAGFLRMQLGKSMKLRTVPQLHFNYDASIRRGVELSSLIERAVAEDRKHSDERGE.

This sequence belongs to the RbfA family. In terms of assembly, monomer. Binds 30S ribosomal subunits, but not 50S ribosomal subunits or 70S ribosomes.

It localises to the cytoplasm. One of several proteins that assist in the late maturation steps of the functional core of the 30S ribosomal subunit. Associates with free 30S ribosomal subunits (but not with 30S subunits that are part of 70S ribosomes or polysomes). Required for efficient processing of 16S rRNA. May interact with the 5'-terminal helix region of 16S rRNA. The chain is Ribosome-binding factor A from Stutzerimonas stutzeri (strain A1501) (Pseudomonas stutzeri).